The primary structure comprises 541 residues: NAD(P)H-quinone oxidoreductase subunit 2 A, chloroplastic (541 aa).

14 consecutive transmembrane segments (helical) span residues 24-44 (LLLF…GLIL), 57-77 (IPWL…ALLF), 99-119 (IFQF…VEYI), 124-144 (MAIT…MFLC), 149-169 (FITI…LSGY), 183-203 (YLLM…WLYG), 227-247 (PGIS…LSPA), 289-309 (ILSP…AASA), 326-346 (WHLL…LIAI), 354-374 (MLAY…IVGD), 385-405 (YMLF…LFGL), 426-446 (ALSL…AGFF), 449-469 (LYLF…IGLL), and 515-535 (MIVC…IIAI).

Belongs to the complex I subunit 2 family. As to quaternary structure, NDH is composed of at least 16 different subunits, 5 of which are encoded in the nucleus.

The protein resides in the plastid. It localises to the chloroplast thylakoid membrane. The enzyme catalyses a plastoquinone + NADH + (n+1) H(+)(in) = a plastoquinol + NAD(+) + n H(+)(out). The catalysed reaction is a plastoquinone + NADPH + (n+1) H(+)(in) = a plastoquinol + NADP(+) + n H(+)(out). Its function is as follows. NDH shuttles electrons from NAD(P)H:plastoquinone, via FMN and iron-sulfur (Fe-S) centers, to quinones in the photosynthetic chain and possibly in a chloroplast respiratory chain. The immediate electron acceptor for the enzyme in this species is believed to be plastoquinone. Couples the redox reaction to proton translocation, and thus conserves the redox energy in a proton gradient. In Coffea arabica (Arabian coffee), this protein is NAD(P)H-quinone oxidoreductase subunit 2 A, chloroplastic.